The sequence spans 997 residues: Glutamate [NMDA] receptor subunit 1 (997 aa).

The N-terminal stretch at 1 to 26 (MAMAEFVFCRPLFGLAIVLLVAPIDA) is a signal peptide. Over 27 to 573 (AQRHTASDNP…TLVSFLQPFS (547 aa)) the chain is Extracellular. N-linked (GlcNAc...) asparagine glycans are attached at residues N258, N314, N345, N397, N454, N481, and N501. Glycine contacts are provided by residues 530-532 (PLT) and R537. Residues 574–594 (NTLWILVMVSVHVVALVLYLL) traverse the membrane as a helical segment. Residues 595–651 (DRFSPFGRFKLSHSDSNEEKALNLSSAVWFAWGVLLNSGIGEGTPRSFSARVLGMVW) are Cytoplasmic-facing. Residues 652 to 672 (AGFAMIIVASYTANLAAFLVL) form a helical membrane-spanning segment. The Extracellular portion of the chain corresponds to 673–831 (ERPKTKLSGI…KTPNTLGLKN (159 aa)). An N-linked (GlcNAc...) asparagine glycan is attached at N693. Residues S703 and D747 each contribute to the glycine site. The helical transmembrane segment at 832-852 (MAGVFILVGVGIAGGVGLIII) threads the bilayer. Residues 853 to 997 (EVIYKKHQVK…YTSDVSHLVV (145 aa)) are Cytoplasmic-facing. The segment at 970–997 (LGKTRPQQSVLPPRYSPGYTSDVSHLVV) is disordered. Positions 987–997 (GYTSDVSHLVV) are enriched in polar residues.

It belongs to the glutamate-gated ion channel (TC 1.A.10.1) family. As to quaternary structure, forms a heteromeric NMDA channel with Nmdar2. Highly expressed in adult heads: in the brain and ring gland. Low expression throughout the entire brain is also seen. Higher expression levels were observed in some scattered cell bodies and part of their fibers, including those from several pairs of DPM (dorsal-posterior-medial) neurons surrounding the calyx, DAL (dorsal-anterior-lateral) and DPL (dorsal-posterior-lateral) neurons in the lateral protocerebrum (LP), VAL (ventral-anterior-lateral) neurons in the anterior protocerebrum, and two pairs of VP (ventral-posterior) neurons in the posterior protocerebrum. Many cell bodies in the optic lobes show preferential expression. Punctuate expression is notably detected in many brain regions including the superior medial protocerebrum. Weakly expressed in the antennal lobes and central complex.

Its subcellular location is the cell membrane. It is found in the postsynaptic cell membrane. The protein localises to the postsynaptic density. Functionally, NMDA receptor subtype of glutamate-gated ion channels with high calcium permeability and voltage-dependent sensitivity to magnesium. Mediated by glycine. This protein plays a key role in synaptic plasticity, synaptogenesis, excitotoxicity, memory acquisition and learning. It mediates neuronal functions in glutamate neurotransmission. Is involved in the cell surface targeting of NMDA receptors. Plays a role in associative learning and in long-term memory consolidation. In Drosophila melanogaster (Fruit fly), this protein is Glutamate [NMDA] receptor subunit 1.